Consider the following 138-residue polypeptide: Basic phospholipase A2 B (138 aa).

The first 16 residues, 1–16 (MRALWIVAVLLLGVEG), serve as a signal peptide directing secretion. 7 disulfide bridges follow: C42-C131, C44-C60, C59-C111, C65-C138, C66-C104, C73-C97, and C91-C102. Ca(2+) contacts are provided by Y43, G45, and G47. H63 is a catalytic residue. Ca(2+) is bound at residue D64. D105 is an active-site residue.

Belongs to the phospholipase A2 family. Group II subfamily. D49 sub-subfamily. Ca(2+) is required as a cofactor. As to expression, expressed by the venom gland.

The protein resides in the secreted. The enzyme catalyses a 1,2-diacyl-sn-glycero-3-phosphocholine + H2O = a 1-acyl-sn-glycero-3-phosphocholine + a fatty acid + H(+). Snake venom phospholipase A2 (PLA2) that shows potent hemolytic activity, and exhibits medium anticoagulant effects by binding to factor Xa (F10) and inhibiting the prothrombinase activity (IC(50) is 90 nM). It is one of the few phospholipases A2 capable of hydrolyzing the phospholipids of E.coli membranes in the presence of a bactericidal/permeability-increasing protein (BPI) of neutrophils. PLA2 catalyzes the calcium-dependent hydrolysis of the 2-acyl groups in 3-sn-phosphoglycerides. The sequence is that of Basic phospholipase A2 B from Gloydius halys (Chinese water mocassin).